Here is a 937-residue protein sequence, read N- to C-terminus: Protein translocase subunit SecA (937 aa).

ATP is bound by residues Q90, G108–T112, and D509.

Belongs to the SecA family. As to quaternary structure, monomer and homodimer. Part of the essential Sec protein translocation apparatus which comprises SecA, SecYEG and auxiliary proteins SecDF. Other proteins may also be involved.

The protein resides in the cell inner membrane. Its subcellular location is the cellular thylakoid membrane. The protein localises to the cytoplasm. The enzyme catalyses ATP + H2O + cellular proteinSide 1 = ADP + phosphate + cellular proteinSide 2.. Its function is as follows. Part of the Sec protein translocase complex. Interacts with the SecYEG preprotein conducting channel. Has a central role in coupling the hydrolysis of ATP to the transfer of proteins into and across the cell membrane, serving as an ATP-driven molecular motor driving the stepwise translocation of polypeptide chains across the membrane. Functionally, probably participates in protein translocation into and across both the cytoplasmic and thylakoid membranes in cyanobacterial cells. The protein is Protein translocase subunit SecA of Parasynechococcus marenigrum (strain WH8102).